Reading from the N-terminus, the 425-residue chain is MCTTISFAEPEIVLGHGRRVLFVNPDDLQIFKEIELPPDLGLKGLGSQSQESCPAAAAATSTSTATATCAGKEPGGKEQQLTKQPEEGGTTASGSGVTSTSVQNVTYSPDGQLLAVTTSGGQKALLLYRSRPENARLLSTRPLARAASAVRFCSDSSSVLVTDKTGDCYQYDCVELEAPPRLLLGHLSVVYDILWSEDQQHIITCDRDDKIRVTNYPATFDIHSYCLGHREFVSGLALLTDKHIASASGDKTLRVWNYIQGKELLQHELPAPAVRLLVRQLEPEKIFQAAVLFYEHVDALGLYRLERSSDDIWSVTATQLVCAEAGSWSISNFTLTSDRIYVTGAENERLSLRVYDIATGQPATSGVPEGWVKMVLDGLGANEEGAPPFIPEDLSVWFKKRFDNVSDYLERKKRRIEEQQQQKCG.

The interval 67 to 102 (ATCAGKEPGGKEQQLTKQPEEGGTTASGSGVTSTSV) is disordered. Positions 88–102 (GGTTASGSGVTSTSV) are enriched in low complexity. WD repeat units lie at residues 97-138 (VTST…ARLL), 142-181 (PLAR…APPR), 185-224 (GHLS…DIHS), 228-266 (GHRE…ELLQ), and 325-365 (AGSW…PATS).

Belongs to the WD repeat TRM82 family. Forms a heterodimer with the catalytic subunit Mettl1. Interacts with mei-P26 and weakly interacts with bgcn; required for the function or formation of the mei-P26-bgcn-bam-sxl complex. Interacts with nanos; may be involved in mei-P26-dependent derepression of the BMP signaling pathway. Interacts with Myc; the interaction may be mediated by mei-P26 and may be involved in the regulation of ribosome biogenesis. In terms of tissue distribution, in testis, it is present at high level in hub cells, a niche for germline stem cells of testis. Ubiquitously expressed in all testicular cells throughout spermatogenesis. Ubiquitously expressed in all germline and somatic cells of the ovary.

It is found in the nucleus. Its subcellular location is the cytoplasm. It participates in tRNA modification; N(7)-methylguanine-tRNA biosynthesis. Its function is as follows. Required for the Mettl1-dependent formation of N(7)-methylguanine at position 46 (m7G46) in tRNA. In the Mettl1-wuho methyltransferase complex, it is required to stabilize and induce conformational changes of the catalytic subunit. Required for binding of nanos mRNA and repression of translation by the mei-P26-bgcn-bam-sxl complex. May cooperate with mei-P26 and nanos to derepress the BMP signaling pathway. May cooperate with mei-P26 to suppress expression of a subset of microRNAs. May cooperate with mei-P26 to regulate bam expression levels in germline cells during gametogenesis. Required to promote mitosis to meiosis transition during gametogenesis. May regulate germline cell division in part by regulating ribosome biogenesis. This Drosophila yakuba (Fruit fly) protein is tRNA (guanine-N(7)-)-methyltransferase non-catalytic subunit wuho.